Here is a 141-residue protein sequence, read N- to C-terminus: Nucleoside diphosphate kinase (141 aa).

Lysine 11, phenylalanine 59, arginine 87, threonine 93, arginine 104, and asparagine 114 together coordinate ATP. The active-site Pros-phosphohistidine intermediate is the histidine 117.

The protein belongs to the NDK family. As to quaternary structure, homotetramer. The cofactor is Mg(2+).

Its subcellular location is the cytoplasm. It carries out the reaction a 2'-deoxyribonucleoside 5'-diphosphate + ATP = a 2'-deoxyribonucleoside 5'-triphosphate + ADP. The enzyme catalyses a ribonucleoside 5'-diphosphate + ATP = a ribonucleoside 5'-triphosphate + ADP. Its function is as follows. Major role in the synthesis of nucleoside triphosphates other than ATP. The ATP gamma phosphate is transferred to the NDP beta phosphate via a ping-pong mechanism, using a phosphorylated active-site intermediate. The protein is Nucleoside diphosphate kinase of Polaromonas sp. (strain JS666 / ATCC BAA-500).